The sequence spans 432 residues: RNA binding protein fox-1 homolog 2 (432 aa).

Residues 1–21 show a composition bias toward low complexity; that stretch reads MAEGGQAQQQPPQLGPGAAAR. The interval 1 to 169 is disordered; that stretch reads MAEGGQAQQQ…STPKRLHVSN (169 aa). 2 stretches are compositionally biased toward polar residues: residues 60–69 and 101–121; these read QGNQEPTTTP and YAGQ…PHGE. A compositionally biased stretch (low complexity) spans 122–159; that stretch reads QSSNSPSNQNGSLTQTEGGAQTDGQQSQTQSSENSESK. Residues 163–239 enclose the RRM domain; that stretch reads KRLHVSNIPF…RKIEVNNATA (77 aa). At arginine 323 the chain carries Omega-N-methylarginine. Asymmetric dimethylarginine is present on residues arginine 339 and arginine 371. Asymmetric dimethylarginine; alternate occurs at positions 423 and 428. An omega-N-methylarginine; alternate mark is found at arginine 423 and arginine 428.

As to quaternary structure, interacts with ER-alpha N-terminal activation domain. Interacts with RBPMS; the interaction allows cooperative assembly of stable cell-specific alternative splicing regulatory complexes.

It localises to the nucleus. The protein localises to the cytoplasm. RNA-binding protein that regulates alternative splicing events by binding to 5'-UGCAUGU-3' elements. Prevents binding of U2AF2 to the 3'-splice site. Regulates alternative splicing of tissue-specific exons and of differentially spliced exons during erythropoiesis. Seems to act as a coregulatory factor of ER-alpha. Together with RNA binding proteins RBPMS and MBNL1/2, activates vascular smooth muscle cells alternative splicing events. The polypeptide is RNA binding protein fox-1 homolog 2 (Rbfox2) (Rattus norvegicus (Rat)).